The primary structure comprises 203 residues: NAD(P)H dehydrogenase (quinone) (203 aa).

A Flavodoxin-like domain is found at 3–194; that stretch reads IMVVYYSAYG…AGANFQGRHV (192 aa). FMN-binding positions include 9-14 and 82-84; these read SAYGHV and ARF. Residue tyrosine 11 participates in NAD(+) binding. Tryptophan 102 serves as a coordination point for substrate. FMN-binding positions include 117-123 and histidine 138; that span reads STGTQHG.

The protein belongs to the WrbA family. FMN is required as a cofactor.

It carries out the reaction a quinone + NADH + H(+) = a quinol + NAD(+). The catalysed reaction is a quinone + NADPH + H(+) = a quinol + NADP(+). The polypeptide is NAD(P)H dehydrogenase (quinone) (Syntrophus aciditrophicus (strain SB)).